Reading from the N-terminus, the 143-residue chain is Ribosomal RNA large subunit methyltransferase H (143 aa).

S-adenosyl-L-methionine contacts are provided by residues G95 and 111–116 (FSDLTF).

It belongs to the RNA methyltransferase RlmH family. As to quaternary structure, homodimer.

The protein localises to the cytoplasm. It carries out the reaction pseudouridine(1915) in 23S rRNA + S-adenosyl-L-methionine = N(3)-methylpseudouridine(1915) in 23S rRNA + S-adenosyl-L-homocysteine + H(+). Its function is as follows. Specifically methylates the pseudouridine at position 1915 (m3Psi1915) in 23S rRNA. This chain is Ribosomal RNA large subunit methyltransferase H, found in Metamycoplasma arthritidis (strain 158L3-1) (Mycoplasma arthritidis).